We begin with the raw amino-acid sequence, 105 residues long: Nitrogen fixation nifHD region glnB-like protein 1 (105 aa).

Belongs to the P(II) protein family.

Functionally, could be involved in the regulation of nitrogen fixation. The polypeptide is Nitrogen fixation nifHD region glnB-like protein 1 (glnBI) (Methanococcus maripaludis (Methanococcus deltae)).